A 194-amino-acid chain; its full sequence is MYQNHKSEILLATPLIKDDIVFTKSVVYLCQNDRHGAMGLIINKPLADTLKDVFEELHIPHTNTFKEILEYPLYMGGPISPHKIMILHTTNGRNYTSTIKLDEGLAITASIDILEDIANNILPEYFLPVVGYSCWTANQLTDEIKSNDWIVTNKLNKKILFNHENKVKWQNHLEHAGYTLQSLDTLFNRNTGNC.

The protein belongs to the UPF0301 (AlgH) family.

The chain is UPF0301 protein FTH_1193 from Francisella tularensis subsp. holarctica (strain OSU18).